A 362-amino-acid chain; its full sequence is Cyclic di-GMP phosphodiesterase PdeL (362 aa).

The HTH luxR-type domain occupies 18 to 83 (HLSLPGSVSE…TFWRDIFFQY (66 aa)). A DNA-binding region (H-T-H motif) is located at residues 42-61 (VTEISQYRNRSAKTISHQKK). One can recognise an EAL domain in the interval 106–360 (HIVTPEAISL…KFISEWVMKA (255 aa)). Gln127 serves as a coordination point for substrate. Glu141 provides a ligand contact to Mg(2+). Substrate contacts are provided by residues 144–145 (VR) and Asn200. Residues Asn200, Glu232, and Asp262 each coordinate Mg(2+). Substrate contacts are provided by residues Asp262, Lys286, 319–322 (EGVE), and Tyr341.

As to quaternary structure, is in a fast thermodynamic monomer-homodimer equilibrium. Dimerization is required for PDE activity. Dimerization affinity is increased about 100-fold upon substrate binding. The cofactor is Mg(2+). Mn(2+) serves as cofactor.

It catalyses the reaction 3',3'-c-di-GMP + H2O = 5'-phosphoguanylyl(3'-&gt;5')guanosine + H(+). Its activity is regulated as follows. Strongly inhibited by Ca(2+). Acts both as an enzyme and as a c-di-GMP sensor to couple transcriptional activity to the c-di-GMP status of the cell. Phosphodiesterase (PDE) that catalyzes the hydrolysis of cyclic-di-GMP (c-di-GMP) to 5'-pGpG. Also acts as a transcription factor to control its own expression. The sequence is that of Cyclic di-GMP phosphodiesterase PdeL from Escherichia coli (strain K12).